The following is a 268-amino-acid chain: Ribosomal RNA small subunit methyltransferase A (268 aa).

S-adenosyl-L-methionine contacts are provided by asparagine 10, isoleucine 12, glycine 37, glutamate 58, aspartate 83, and asparagine 107.

It belongs to the class I-like SAM-binding methyltransferase superfamily. rRNA adenine N(6)-methyltransferase family. RsmA subfamily.

The protein localises to the cytoplasm. The enzyme catalyses adenosine(1518)/adenosine(1519) in 16S rRNA + 4 S-adenosyl-L-methionine = N(6)-dimethyladenosine(1518)/N(6)-dimethyladenosine(1519) in 16S rRNA + 4 S-adenosyl-L-homocysteine + 4 H(+). Specifically dimethylates two adjacent adenosines (A1518 and A1519) in the loop of a conserved hairpin near the 3'-end of 16S rRNA in the 30S particle. May play a critical role in biogenesis of 30S subunits. In Caldanaerobacter subterraneus subsp. tengcongensis (strain DSM 15242 / JCM 11007 / NBRC 100824 / MB4) (Thermoanaerobacter tengcongensis), this protein is Ribosomal RNA small subunit methyltransferase A.